The sequence spans 345 residues: Fructose-1,6-bisphosphatase class 1 (345 aa).

Glu-90, Asp-109, Leu-111, and Asp-112 together coordinate Mg(2+). Substrate-binding positions include 112–115 (DGSS) and Asn-200. Glu-272 serves as a coordination point for Mg(2+).

Belongs to the FBPase class 1 family. As to quaternary structure, homotetramer. It depends on Mg(2+) as a cofactor.

It is found in the cytoplasm. It catalyses the reaction beta-D-fructose 1,6-bisphosphate + H2O = beta-D-fructose 6-phosphate + phosphate. The protein operates within carbohydrate biosynthesis; gluconeogenesis. The chain is Fructose-1,6-bisphosphatase class 1 from Bradyrhizobium diazoefficiens (strain JCM 10833 / BCRC 13528 / IAM 13628 / NBRC 14792 / USDA 110).